Reading from the N-terminus, the 197-residue chain is Protein jagunal (197 aa).

Topologically, residues 1-39 are cytoplasmic; the sequence is MATRGGPMVAGTDGNDFEFRQRVAGTYQISLLNKSRLKY. The chain crosses the membrane as a helical span at residues 40–60; the sequence is CIFFHALLFFVMLAKLTSDIL. Residues 61 to 78 lie on the Lumenal side of the membrane; sequence DRLDIFVLEIEELEVPSP. Residues 79-99 form a helical membrane-spanning segment; that stretch reads LWWEYVWAGSLLTSFLGLSAA. The Cytoplasmic segment spans residues 100-109; the sequence is RGNKVREMQK. Residues 110–130 traverse the membrane as a helical segment; the sequence is YMIAILVFAILPLLYCFAYYF. Residues 131 to 159 are Lumenal-facing; it reads SDVWEFATMDKSVELDETDIFIWRGYPYG. A helical membrane pass occupies residues 160–180; the sequence is VFWYAFCFVGFQVHGFTLYFA. Residues 181-197 lie on the Cytoplasmic side of the membrane; it reads YNLVKVWKARTATRKFQ.

This sequence belongs to the jagunal family.

Its subcellular location is the endoplasmic reticulum membrane. Its function is as follows. Required for endoplasmic reticulum organization and proper vesicular traffic during vitellogenesis. Required for oocyte and bristle growth. The chain is Protein jagunal from Drosophila pseudoobscura pseudoobscura (Fruit fly).